Here is a 288-residue protein sequence, read N- to C-terminus: 2-dehydro-3-deoxyphosphooctonate aldolase (288 aa).

It belongs to the KdsA family.

The protein localises to the cytoplasm. It catalyses the reaction D-arabinose 5-phosphate + phosphoenolpyruvate + H2O = 3-deoxy-alpha-D-manno-2-octulosonate-8-phosphate + phosphate. Its pathway is carbohydrate biosynthesis; 3-deoxy-D-manno-octulosonate biosynthesis; 3-deoxy-D-manno-octulosonate from D-ribulose 5-phosphate: step 2/3. It participates in bacterial outer membrane biogenesis; lipopolysaccharide biosynthesis. The polypeptide is 2-dehydro-3-deoxyphosphooctonate aldolase (Bdellovibrio bacteriovorus (strain ATCC 15356 / DSM 50701 / NCIMB 9529 / HD100)).